A 984-amino-acid chain; its full sequence is Ephrin type-B receptor 1 (984 aa).

The 182-residue stretch at 1–182 (ETLMDTRTAT…FFKKCPSVVQ (182 aa)) folds into the Eph LBD domain. Over 1–541 (ETLMDTRTAT…KSELREQLPL (541 aa)) the chain is Extracellular. Fibronectin type-III domains lie at 303–413 (VPSG…TNQA) and 414–528 (APST…TLTD). N-linked (GlcNAc...) asparagine glycans are attached at residues Asn-315, Asn-407, and Asn-480. A helical transmembrane segment spans residues 542-562 (IAGSAAAGVVFIVSLVAISIV). Topologically, residues 563–984 (CSRKRAYSKE…QMSQSPTSMA (422 aa)) are cytoplasmic. One can recognise a Protein kinase domain in the interval 619-882 (VKIEEVIGAG…EIVNTLDKMI (264 aa)). Residues 625–633 (IGAGEFGEV) and Lys-651 contribute to the ATP site. Asp-744 serves as the catalytic Proton acceptor. The SAM domain maps to 911–975 (TAFTSVEDWL…LNSIQSMRVQ (65 aa)). Positions 982–984 (SMA) match the PDZ-binding motif.

It belongs to the protein kinase superfamily. Tyr protein kinase family. Ephrin receptor subfamily. As to quaternary structure, heterotetramer upon binding of the ligand. The heterotetramer is composed of an ephrin dimer and a receptor dimer. Oligomerization is probably required to induce biological responses. In terms of processing, phosphorylated. Autophosphorylation is stimulated by ligands. Expressed at high levels in the 10-day embryo, and in adult brain, lung, heart and skeletal muscle. Low levels of expression detected in all other adult tissues tested.

The protein resides in the cell membrane. It is found in the early endosome membrane. It localises to the cell projection. The protein localises to the dendrite. The enzyme catalyses L-tyrosyl-[protein] + ATP = O-phospho-L-tyrosyl-[protein] + ADP + H(+). Functionally, receptor tyrosine kinase which binds promiscuously transmembrane ephrin-B family ligands residing on adjacent cells, leading to contact-dependent bidirectional signaling into neighboring cells. The signaling pathway downstream of the receptor is referred to as forward signaling while the signaling pathway downstream of the ephrin ligand is referred to as reverse signaling. May play a role in axon guidance during nervous system development. May also play an important redundant role with other ephrin-B receptors in development and maturation of dendritic spines and synapse formation. More generally, may play a role in targeted cell migration and adhesion. Upon activation by ephrin-B ligands activates the MAPK/ERK and the JNK signaling cascades to regulate cell migration and adhesion respectively. The chain is Ephrin type-B receptor 1 (EPHB1) from Gallus gallus (Chicken).